The chain runs to 148 residues: Lysozyme C (148 aa).

An N-terminal signal peptide occupies residues 1 to 18 (MKAPLLLGLLLLSVTVQG). Positions 19–148 (KVFERCDLAR…VSQYVRNCGV (130 aa)) constitute a C-type lysozyme domain. Disulfide bonds link C24–C146, C48–C134, C83–C99, and C95–C113. Active-site residues include E53 and D71.

Belongs to the glycosyl hydrolase 22 family. In terms of assembly, monomer.

The protein localises to the secreted. The enzyme catalyses Hydrolysis of (1-&gt;4)-beta-linkages between N-acetylmuramic acid and N-acetyl-D-glucosamine residues in a peptidoglycan and between N-acetyl-D-glucosamine residues in chitodextrins.. Lysozymes have primarily a bacteriolytic function; those in tissues and body fluids are associated with the monocyte-macrophage system and enhance the activity of immunoagents. The protein is Lysozyme C (LYZ) of Leptonychotes weddellii (Weddell seal).